A 288-amino-acid polypeptide reads, in one-letter code: ATP synthase gamma chain (288 aa).

Belongs to the ATPase gamma chain family. F-type ATPases have 2 components, CF(1) - the catalytic core - and CF(0) - the membrane proton channel. CF(1) has five subunits: alpha(3), beta(3), gamma(1), delta(1), epsilon(1). CF(0) has three main subunits: a, b and c.

It localises to the cell inner membrane. Produces ATP from ADP in the presence of a proton gradient across the membrane. The gamma chain is believed to be important in regulating ATPase activity and the flow of protons through the CF(0) complex. The polypeptide is ATP synthase gamma chain (Chromobacterium violaceum (strain ATCC 12472 / DSM 30191 / JCM 1249 / CCUG 213 / NBRC 12614 / NCIMB 9131 / NCTC 9757 / MK)).